We begin with the raw amino-acid sequence, 111 residues long: MNQLQNLAEALSASSPVSGTVQTVVDGNTTTTTTTNTGLGVVAVGAGLAMIGAIGSGLGQGYAAGKTVEAVGRNPEMISKIRATFIIGAGIAETASIYSFIVALLLIFVGK.

The next 2 membrane-spanning stretches (helical) occupy residues 38–58 (GLGV…GSGL) and 89–109 (AGIA…LIFV).

Belongs to the ATPase C chain family. As to quaternary structure, F-type ATPases have 2 components, F(1) - the catalytic core - and F(0) - the membrane proton channel. F(1) has five subunits: alpha(3), beta(3), gamma(1), delta(1), epsilon(1). F(0) has three main subunits: a(1), b(2) and c(10-14). The alpha and beta chains form an alternating ring which encloses part of the gamma chain. F(1) is attached to F(0) by a central stalk formed by the gamma and epsilon chains, while a peripheral stalk is formed by the delta and b chains.

Its subcellular location is the cell membrane. Its function is as follows. F(1)F(0) ATP synthase produces ATP from ADP in the presence of a proton or sodium gradient. F-type ATPases consist of two structural domains, F(1) containing the extramembraneous catalytic core and F(0) containing the membrane proton channel, linked together by a central stalk and a peripheral stalk. During catalysis, ATP synthesis in the catalytic domain of F(1) is coupled via a rotary mechanism of the central stalk subunits to proton translocation. Functionally, key component of the F(0) channel; it plays a direct role in translocation across the membrane. A homomeric c-ring of between 10-14 subunits forms the central stalk rotor element with the F(1) delta and epsilon subunits. The chain is ATP synthase subunit c from Mycoplasmopsis synoviae (strain 53) (Mycoplasma synoviae).